Here is a 113-residue protein sequence, read N- to C-terminus: MIFLQESLVAHISYQPLDEDPCPPQYILEAPVDLWYPVISRFIIGPFGYKGHKAVIMACAGTMSFLLQLLIVLEALTLVYQYTLLTQRLNHKKLIQPLSLSTTSDMWKNGICL.

The protein is Probable protein L3 of Bos taurus (Bovine).